The chain runs to 166 residues: MSEAIIAKKAELVDAVAEKMKAAASIVVVDARGLTVEQDTVLRRELRGSEVEYKVIKNSILRRAAEKAGLEDLASIFVGPSAVAFSNEDVVAPAKILNDFAKNADALEIKGGAIEGAVASKEEILALATLPNREGLLSMLLSVLQAPVRNVALAVKAVADNKEDAA.

It belongs to the universal ribosomal protein uL10 family. In terms of assembly, part of the ribosomal stalk of the 50S ribosomal subunit. The N-terminus interacts with L11 and the large rRNA to form the base of the stalk. The C-terminus forms an elongated spine to which L12 dimers bind in a sequential fashion forming a multimeric L10(L12)X complex.

Functionally, forms part of the ribosomal stalk, playing a central role in the interaction of the ribosome with GTP-bound translation factors. This is Large ribosomal subunit protein uL10 from Streptococcus sanguinis (strain SK36).